The chain runs to 109 residues: Nucleoid-associated protein ETA_24730 (109 aa).

Belongs to the YbaB/EbfC family. Homodimer.

It is found in the cytoplasm. Its subcellular location is the nucleoid. Binds to DNA and alters its conformation. May be involved in regulation of gene expression, nucleoid organization and DNA protection. The chain is Nucleoid-associated protein ETA_24730 from Erwinia tasmaniensis (strain DSM 17950 / CFBP 7177 / CIP 109463 / NCPPB 4357 / Et1/99).